A 495-amino-acid chain; its full sequence is Putative aldehyde dehydrogenase AldA (495 aa).

212–218 (GKGSESG) provides a ligand contact to NAD(+). Residues Glu256 and Cys290 contribute to the active site.

This sequence belongs to the aldehyde dehydrogenase family.

It carries out the reaction an aldehyde + NAD(+) + H2O = a carboxylate + NADH + 2 H(+). The protein is Putative aldehyde dehydrogenase AldA (aldA) of Staphylococcus aureus (strain bovine RF122 / ET3-1).